Consider the following 318-residue polypeptide: Trans-prenyltransferase (318 aa).

A helical transmembrane segment spans residues 1–21; the sequence is MLHLIYISIIVVLIIILISYT. Isopentenyl diphosphate contacts are provided by Lys85, Arg88, and His122. Mg(2+) contacts are provided by Asp129 and Asp135. Arg140 contacts dimethylallyl diphosphate. Position 141 (Arg141) interacts with isopentenyl diphosphate. 3 residues coordinate dimethylallyl diphosphate: Lys216, Thr217, and Gln254.

Belongs to the FPP/GGPP synthase family. Asfivirus trans-prenyltransferase subfamily. Mg(2+) serves as cofactor.

It is found in the host endoplasmic reticulum. Its subcellular location is the host membrane. It carries out the reaction isopentenyl diphosphate + dimethylallyl diphosphate = (2E)-geranyl diphosphate + diphosphate. The enzyme catalyses isopentenyl diphosphate + (2E)-geranyl diphosphate = (2E,6E)-farnesyl diphosphate + diphosphate. The catalysed reaction is isopentenyl diphosphate + (2E,6E)-farnesyl diphosphate = (2E,6E,10E)-geranylgeranyl diphosphate + diphosphate. It catalyses the reaction isopentenyl diphosphate + (2E,6E,10E)-geranylgeranyl diphosphate = (2E,6E,10E,14E)-geranylfarnesyl diphosphate + diphosphate. The protein operates within isoprenoid biosynthesis; farnesyl diphosphate biosynthesis; farnesyl diphosphate from geranyl diphosphate and isopentenyl diphosphate: step 1/1. It participates in isoprenoid biosynthesis; geranyl diphosphate biosynthesis; geranyl diphosphate from dimethylallyl diphosphate and isopentenyl diphosphate: step 1/1. It functions in the pathway isoprenoid biosynthesis; geranylgeranyl diphosphate biosynthesis; geranylgeranyl diphosphate from farnesyl diphosphate and isopentenyl diphosphate: step 1/1. In terms of biological role, trans-prenyltransferase that catalyzes the sequential condensation of isopentenyl diphosphate (IPP) with different allylic diphosphates, such as dimethylallyl diphosphate (DMAPP), geranyl diphosphate (GPP), farnesyl diphosphate (FPP) and geranylgeranyl diphosphate (GGPP), farnesyl diphosphate being the best allylic substrate. This African swine fever virus (isolate Warthog/Namibia/Wart80/1980) (ASFV) protein is Trans-prenyltransferase.